The primary structure comprises 1411 residues: Early endosome antigen 1 (1411 aa).

A disordered region spans residues 1–27; that stretch reads MLRRILQRTPGRVGSQGSDLDSSATPI. Residues 15–27 show a composition bias toward polar residues; that stretch reads SQGSDLDSSATPI. The C2H2-type zinc-finger motif lies at 41-64; the sequence is FICPQCMKSLGSADELFKHYEAVH. Residues Ser52 and Ser70 each carry the phosphoserine modification. Residues 74-1348 are a coiled coil; that stretch reads GESNLALKRD…IKHTQALNRK (1275 aa). Positions 473–501 are disordered; that stretch reads VTNSTELQHQLDKTKQQHQEQQALQQSTT. The segment covering 481–490 has biased composition (basic and acidic residues); that stretch reads HQLDKTKQQH. The FYVE-type zinc-finger motif lies at 1352-1410; sequence DNEVQNCMACGKGFSVTVRRHHCRQCGNIFCAECSAKNALTPSSKKPVRVCDACFNDLQ. The Zn(2+) site is built by Cys1358, Cys1361, Cys1374, Cys1377, Cys1382, Cys1385, Cys1402, and Cys1405.

Homodimer. Binds STX6. Binds RAB5A, RAB5B, RAB5C and RAB22A that have been activated by GTP-binding. Interacts with RAB31. Interacts with ERBB2. Interacts with SAMD9 and SAMD9L. May interact with PLEKHF2.

Its subcellular location is the cytoplasm. It is found in the early endosome membrane. Its function is as follows. Binds phospholipid vesicles containing phosphatidylinositol 3-phosphate and participates in endosomal trafficking. This is Early endosome antigen 1 (EEA1) from Homo sapiens (Human).